A 129-amino-acid polypeptide reads, in one-letter code: uncharacterized protein (129 aa).

An HIT domain is found at 3-109 (IFCKIINGEI…IPRYEGDGEV (107 aa)). A Histidine triad motif motif is present at residues 94–98 (HVHFH).

This is an uncharacterized protein from Methanocaldococcus jannaschii (strain ATCC 43067 / DSM 2661 / JAL-1 / JCM 10045 / NBRC 100440) (Methanococcus jannaschii).